A 72-amino-acid chain; its full sequence is Large ribosomal subunit protein uL29 (72 aa).

The protein belongs to the universal ribosomal protein uL29 family.

The sequence is that of Large ribosomal subunit protein uL29 (rpmC) from Chlamydia muridarum (strain MoPn / Nigg).